Reading from the N-terminus, the 510-residue chain is NAD(P)H-quinone oxidoreductase subunit 2 A, chloroplastic (510 aa).

A run of 13 helical transmembrane segments spans residues Leu24–Leu44, Ile57–Phe77, Ile99–Ile119, Met124–Cys144, Leu149–Tyr169, Tyr183–Gly203, Pro227–Ala247, Trp295–Ile315, Met323–Asp343, Tyr354–Leu374, Ala395–Phe415, Ile418–Leu438, and Met484–Ile504.

This sequence belongs to the complex I subunit 2 family. As to quaternary structure, NDH is composed of at least 16 different subunits, 5 of which are encoded in the nucleus.

Its subcellular location is the plastid. It is found in the chloroplast thylakoid membrane. The catalysed reaction is a plastoquinone + NADH + (n+1) H(+)(in) = a plastoquinol + NAD(+) + n H(+)(out). It carries out the reaction a plastoquinone + NADPH + (n+1) H(+)(in) = a plastoquinol + NADP(+) + n H(+)(out). In terms of biological role, NDH shuttles electrons from NAD(P)H:plastoquinone, via FMN and iron-sulfur (Fe-S) centers, to quinones in the photosynthetic chain and possibly in a chloroplast respiratory chain. The immediate electron acceptor for the enzyme in this species is believed to be plastoquinone. Couples the redox reaction to proton translocation, and thus conserves the redox energy in a proton gradient. This Spinacia oleracea (Spinach) protein is NAD(P)H-quinone oxidoreductase subunit 2 A, chloroplastic.